A 425-amino-acid chain; its full sequence is 3-phosphoshikimate 1-carboxyvinyltransferase (425 aa).

Positions 22, 23, and 27 each coordinate 3-phosphoshikimate. Lys-22 contributes to the phosphoenolpyruvate binding site. The phosphoenolpyruvate site is built by Gly-95 and Arg-123. 3-phosphoshikimate-binding residues include Ser-169, Ser-170, Gln-171, Ser-197, Asp-313, Asn-336, and Lys-340. Gln-171 contributes to the phosphoenolpyruvate binding site. Asp-313 functions as the Proton acceptor in the catalytic mechanism. 3 residues coordinate phosphoenolpyruvate: Arg-344, Arg-386, and Lys-411.

This sequence belongs to the EPSP synthase family. In terms of assembly, monomer.

It is found in the cytoplasm. It carries out the reaction 3-phosphoshikimate + phosphoenolpyruvate = 5-O-(1-carboxyvinyl)-3-phosphoshikimate + phosphate. It participates in metabolic intermediate biosynthesis; chorismate biosynthesis; chorismate from D-erythrose 4-phosphate and phosphoenolpyruvate: step 6/7. In terms of biological role, catalyzes the transfer of the enolpyruvyl moiety of phosphoenolpyruvate (PEP) to the 5-hydroxyl of shikimate-3-phosphate (S3P) to produce enolpyruvyl shikimate-3-phosphate and inorganic phosphate. In Marinomonas sp. (strain MWYL1), this protein is 3-phosphoshikimate 1-carboxyvinyltransferase.